The sequence spans 288 residues: Diaminopimelate epimerase (288 aa).

The substrate site is built by Asn13, Gln51, and Asn71. The active-site Proton donor is Cys80. Residues 81-82 (GN), Asn166, Asn200, and 218-219 (ER) each bind substrate. The Proton acceptor role is filled by Cys227. 228–229 (GT) lines the substrate pocket.

The protein belongs to the diaminopimelate epimerase family. In terms of assembly, homodimer.

The protein resides in the cytoplasm. It carries out the reaction (2S,6S)-2,6-diaminopimelate = meso-2,6-diaminopimelate. It participates in amino-acid biosynthesis; L-lysine biosynthesis via DAP pathway; DL-2,6-diaminopimelate from LL-2,6-diaminopimelate: step 1/1. In terms of biological role, catalyzes the stereoinversion of LL-2,6-diaminopimelate (L,L-DAP) to meso-diaminopimelate (meso-DAP), a precursor of L-lysine and an essential component of the bacterial peptidoglycan. The sequence is that of Diaminopimelate epimerase from Caulobacter vibrioides (strain ATCC 19089 / CIP 103742 / CB 15) (Caulobacter crescentus).